Reading from the N-terminus, the 141-residue chain is MAKKVEKLVKLQIPAGKATPAPPVGPALGQAGINIMGFTKEFNARTADQAGMIIPVVISVYEDKSFTFITKTPPAAVLLKKAAGVEKGSGTPNKTKVATVTRAQVQEIAETKMPDLNAASLEAAMRMIEGTARSMGFTVTD.

The protein belongs to the universal ribosomal protein uL11 family. Part of the ribosomal stalk of the 50S ribosomal subunit. Interacts with L10 and the large rRNA to form the base of the stalk. L10 forms an elongated spine to which L12 dimers bind in a sequential fashion forming a multimeric L10(L12)X complex. Post-translationally, one or more lysine residues are methylated.

Forms part of the ribosomal stalk which helps the ribosome interact with GTP-bound translation factors. The polypeptide is Large ribosomal subunit protein uL11 (Streptococcus suis (strain 98HAH33)).